The following is a 478-amino-acid chain: MFRLNSLSALAELAVGSRWYHGGSQPTQIRRRLMMVAFLGASAVTASTGLLWKRALAESPPSANNIKSELGDKGKSKEEGEDCNAEKKAAGVCLEPYPEEKKKKRSGFRDRKVMEYENRIRAYSTPDKIFRYFATLKVISEHGESEVFMTPQDFVRSITPNEKQPEHLGLDQYTIKRFDGKKIAQEREKFADEGSIFYTLGECGLISFSDYIFLTTVLSTPQRNFEIAFKMFDLNGDGEVDMEEFEQVQSIIRSQTSMGMRHRDRSTTGNTLKSGLCSALTTYFFGADLKGKLTIKNFLEFQRKLQHDVLKLEFERHDPVDGRITERQFGGMLLAYSGVQSKKLTAMQKQLKKHFKEGKGLTFQEVENFFTFLKNINDVDTALSFYHMAGASLDKVTMQQVARTVAKVELSDHVCDVVFALFDCDGNGELSNKEFVSIMKQRLMRGLEKPKDMGFTRLMQAMWKCAQETAWDFALPKQ.

A mitochondrion-targeting transit peptide spans 1–33 (MFRLNSLSALAELAVGSRWYHGGSQPTQIRRRL). The segment at 61–85 (PSANNIKSELGDKGKSKEEGEDCNA) is disordered. The span at 69–85 (ELGDKGKSKEEGEDCNA) shows a compositional bias: basic and acidic residues. The polybasic region stretch occupies residues 101–112 (KKKKRSGFRDRK). Ser124 carries the post-translational modification Phosphoserine. The k/R-ring stretch occupies residues 128–131 (KIFR). Positions 220–255 (TPQRNFEIAFKMFDLNGDGEVDMEEFEQVQSIIRSQ) constitute an EF-hand 1 domain. Positions 233, 235, 237, 239, and 244 each coordinate Ca(2+). Residues 261–265 (RHRDR) are k/R-ring. The EF-hand 2 domain maps to 410–445 (LSDHVCDVVFALFDCDGNGELSNKEFVSIMKQRLMR). Asp423, Asp425, Asn427, Glu429, and Glu434 together coordinate Ca(2+). The residue at position 457 (Arg457) is an Asymmetric dimethylarginine. The interval 457–467 (RLMQAMWKCAQ) is C-helix region.

It belongs to the MICU1 family. MICU1 subfamily. As to quaternary structure, heterodimer; disulfide-linked; heterodimerizes with MICU2 or MICU3. Homodimer; disulfide-linked. Component of the uniplex complex, composed of MCU, EMRE/SMDT1, MICU1 and MICU2 (or MICU3) in a 4:4:1:1 stoichiometry. The composition of calcium sensors within the uniplex complex can differ depending on tissues: a MICU1 homodimer can be present instead of the MICU1-MICU2 heterodimer in skeletal-muscle and kidney. MICU1 is recruited to the uniplex complex by EMRE/SMDT1, and it associates with MCU at low calcium levels, occluding the pore of the MCU channel. Associates with the MICOS complex. Interacts with SLC25A23. Interacts with CHCHD4/MIA40; which introduces the interchain disulfide bond with MICU2. Interacts (when methylated) with UCP2; leading to decrease the calcium sensitivity of MICU1. Post-translationally, phosphorylation at Ser-124 by AKT1 impairs its maturation and stability. In terms of processing, asymmetric dimethylation at Arg-457 by PRMT1 decreases the calcium sensitivity of MICU1 by promoting interaction with UCP2. Degraded by YME1L1 when not complexed as homodimer or heterodimer. Not degraded when complexed as homodimer or heterodimer; the presence of the interchain disulfide bond protecting MICU1 from degradation by YME1L1.

Its subcellular location is the mitochondrion intermembrane space. It is found in the mitochondrion inner membrane. Its function is as follows. Calcium sensor of the mitochondrial calcium uniporter (MCU) channel, which senses calcium level via its EF-hand domains. MICU1 and MICU2 (or MICU3) form a disulfide-linked heterodimer that stimulates and inhibits MCU activity, depending on the concentration of calcium. At low calcium levels, MICU1 occludes the pore of the MCU channel, preventing mitochondrial calcium uptake. At higher calcium levels, calcium-binding to MICU1 and MICU2 (or MICU3) induces a conformational change that weakens MCU-MICU1 interactions and moves the MICU1-MICU2 heterodimer away from the pore, allowing calcium permeation through the MCU channel. Also required to protect against manganese toxicity by preventing manganese uptake by MCU: mechanistically, manganese-binding to its EF-hand domains does not induce any conformational change, maintaining MCU pore occlusion. Acts as a regulator of mitochondrial cristae structure independently of its ability to regulate the mitochondrial calcium uniporter channel. Regulates glucose-dependent insulin secretion in pancreatic beta-cells by regulating mitochondrial calcium uptake. Induces T-helper 1-mediated autoreactivity, which is accompanied by the release of IFNG. This Bos taurus (Bovine) protein is Calcium uptake protein 1, mitochondrial (MICU1).